The sequence spans 216 residues: ATP-dependent Clp protease proteolytic subunit (216 aa).

The active-site Nucleophile is the Ser-101. His-126 is an active-site residue.

The protein belongs to the peptidase S14 family. As to quaternary structure, component of the chloroplastic Clp protease core complex.

The protein localises to the plastid. It is found in the chloroplast stroma. It carries out the reaction Hydrolysis of proteins to small peptides in the presence of ATP and magnesium. alpha-casein is the usual test substrate. In the absence of ATP, only oligopeptides shorter than five residues are hydrolyzed (such as succinyl-Leu-Tyr-|-NHMec, and Leu-Tyr-Leu-|-Tyr-Trp, in which cleavage of the -Tyr-|-Leu- and -Tyr-|-Trp bonds also occurs).. Functionally, cleaves peptides in various proteins in a process that requires ATP hydrolysis. Has a chymotrypsin-like activity. Plays a major role in the degradation of misfolded proteins. The protein is ATP-dependent Clp protease proteolytic subunit of Triticum aestivum (Wheat).